A 530-amino-acid chain; its full sequence is AP-4 complex subunit mu (530 aa).

The tract at residues 164 to 187 (PKQGVKPIHSGSKNSSSGGSSLST) is disordered. Residues 173–186 (SGSKNSSSGGSSLS) show a composition bias toward low complexity. One can recognise an MHD domain in the interval 227-527 (DNEIYIDLCE…ITDSKSFVSR (301 aa)).

The protein belongs to the adaptor complexes medium subunit family. May be part of the adaptor protein complex 4 (AP-4), a heterotetramer composed of two large adaptins (epsilon-type subunitand beta-type subunit), a medium adaptin (mu-type subunit) and a small adaptin (sigma-type).

The protein localises to the golgi apparatus. It localises to the trans-Golgi network membrane. Its subcellular location is the early endosome. Probable component of an adaptor protein complex. Adaptor protein complexes are vesicle coat components involved both in vesicle formation and cargo selection. They control the vesicular transport of proteins in different trafficking pathways. This chain is AP-4 complex subunit mu (apm4), found in Dictyostelium discoideum (Social amoeba).